Here is a 169-residue protein sequence, read N- to C-terminus: Crossover junction endodeoxyribonuclease RuvC (169 aa).

Catalysis depends on residues Asp-15, Glu-75, and Asp-147. Positions 15, 75, and 147 each coordinate Mg(2+).

This sequence belongs to the RuvC family. Homodimer which binds Holliday junction (HJ) DNA. The HJ becomes 2-fold symmetrical on binding to RuvC with unstacked arms; it has a different conformation from HJ DNA in complex with RuvA. In the full resolvosome a probable DNA-RuvA(4)-RuvB(12)-RuvC(2) complex forms which resolves the HJ. Requires Mg(2+) as cofactor.

The protein localises to the cytoplasm. The catalysed reaction is Endonucleolytic cleavage at a junction such as a reciprocal single-stranded crossover between two homologous DNA duplexes (Holliday junction).. Its function is as follows. The RuvA-RuvB-RuvC complex processes Holliday junction (HJ) DNA during genetic recombination and DNA repair. Endonuclease that resolves HJ intermediates. Cleaves cruciform DNA by making single-stranded nicks across the HJ at symmetrical positions within the homologous arms, yielding a 5'-phosphate and a 3'-hydroxyl group; requires a central core of homology in the junction. The consensus cleavage sequence is 5'-(A/T)TT(C/G)-3'. Cleavage occurs on the 3'-side of the TT dinucleotide at the point of strand exchange. HJ branch migration catalyzed by RuvA-RuvB allows RuvC to scan DNA until it finds its consensus sequence, where it cleaves and resolves the cruciform DNA. The polypeptide is Crossover junction endodeoxyribonuclease RuvC (Caulobacter vibrioides (strain ATCC 19089 / CIP 103742 / CB 15) (Caulobacter crescentus)).